A 615-amino-acid polypeptide reads, in one-letter code: MNIIFLIILFPLIGFLFLSLIQGTISERNTNIIGISSIFVSLIITFFYITGFINYSSQIFTQKLFSWISINELDIDCSLILDGLSLSMLAMILGIGLLIHIFSTWYMKDKEGYSRFFAYTNLFIASMSLLVLADNFLFMYLGWEIVSICSYLLIGFYYKTTNNTSCALKAFVFTRISDVFLIISMFLIYNKYGTFNFQEIKFLSNFLNVEDCFDLNVLTLCLLLGVMGKSAQLPLHTWLSDAMVGPTPVSALIHAATMVTAGVYLIARTHFLFLLTPKILYLISLIGIITIFISSFSALVQQDIKRILAYSTMSQIGYMFLALGVKAWTAAIVHLIVHAIFKALLFLSSGSLILSCNNEKNIFNLSKVSSKCPLLYVSFLVGGASLVSFPLITSGFYSKGNILFSVLKDGYFNLFLIGLFCSFLTSIYTFRMIFVIFHRSSVSFVFSNKRLAHNLPLLILLFFSTMFGYFIIRLPLFYVFPMVKSLENGKFLYEIISSFISFLGIFIAYHIWIKQPFWFFRFLKFKIIKLIHKFLLNGWYFDFFYKILFIHPYLFISKILSYEPFDFFPTFFVAFIKKTNSIVLKSVNGNVKCYISTMFVGINLFFILVLCSFLS.

Transmembrane regions (helical) follow at residues 1–21 (MNII…LSLI), 32–52 (IIGI…ITGF), 79–99 (LILD…GLLI), 113–133 (YSRF…LVLA), 136–156 (FLFM…LIGF), 168–188 (LKAF…MFLI), 247–267 (TPVS…YLIA), 279–299 (ILYL…FSAL), 327–347 (AWTA…LLFL), 372–392 (CPLL…FPLI), 410–430 (GYFN…IYTF), 457–477 (LLIL…LPLF), 491–511 (FLYE…AYHI), 536–556 (LNGW…YLFI), and 594–614 (YIST…CSFL).

Belongs to the complex I subunit 5 family. Composed of 13 different subunits. Subunits NuoA, H, J, K, L, M, N constitute the membrane sector of the complex.

The protein resides in the cell membrane. It carries out the reaction a quinone + NADH + 5 H(+)(in) = a quinol + NAD(+) + 4 H(+)(out). Functionally, NDH-1 shuttles electrons from NADH, via FMN and iron-sulfur (Fe-S) centers, to quinones in the respiratory chain. Couples the redox reaction to proton translocation (for every two electrons transferred, four hydrogen ions are translocated across the cytoplasmic membrane), and thus conserves the redox energy in a proton gradient. The chain is NADH-quinone oxidoreductase subunit L (nuoL) from Buchnera aphidicola subsp. Schizaphis graminum (strain Sg).